The primary structure comprises 345 residues: Ferrochelatase (345 aa).

Residues His-215 and Glu-296 each coordinate Fe cation.

Belongs to the ferrochelatase family.

Its subcellular location is the cytoplasm. The enzyme catalyses heme b + 2 H(+) = protoporphyrin IX + Fe(2+). It participates in porphyrin-containing compound metabolism; protoheme biosynthesis; protoheme from protoporphyrin-IX: step 1/1. Functionally, catalyzes the ferrous insertion into protoporphyrin IX. This Rhodopseudomonas palustris (strain BisB5) protein is Ferrochelatase.